Here is a 210-residue protein sequence, read N- to C-terminus: MNKQPALAQEQYACVYAWLALLFFREVDDEGLIQLQSAEIADWLALLKRQPALAASVALLEQKIAALSLRQDAQLELAADFCGLFLMTDKKSALPYASQYPQQEPGMIKHLLLEAGMEVNDDFKEPTDHLAIYLELLSHLHFSLGESFQQRRMNKLRQKTLSSLLEWLPEFTNNCFKHDSYGFYAALSQLLLAIVRFDDGKEDLSIVAAE.

This sequence belongs to the TorD/DmsD family. TorD subfamily.

It is found in the cytoplasm. In terms of biological role, involved in the biogenesis of TorA. Acts on TorA before the insertion of the molybdenum cofactor and, as a result, probably favors a conformation of the apoenzyme that is competent for acquiring the cofactor. The polypeptide is Chaperone protein TorD (Salmonella schwarzengrund (strain CVM19633)).